The chain runs to 471 residues: Ribulose bisphosphate carboxylase large chain (471 aa).

The propeptide occupies 1 to 2 (MS). Pro-3 carries the post-translational modification N-acetylproline. An N6,N6,N6-trimethyllysine modification is found at Lys-14. Substrate-binding residues include Asn-123 and Thr-173. The active-site Proton acceptor is the Lys-175. Lys-177 contacts substrate. Mg(2+)-binding residues include Lys-201, Asp-203, and Glu-204. At Lys-201 the chain carries N6-carboxylysine. His-294 functions as the Proton acceptor in the catalytic mechanism. Substrate is bound by residues Arg-295, His-327, and Ser-379.

It belongs to the RuBisCO large chain family. Type I subfamily. In terms of assembly, heterohexadecamer of 8 large chains and 8 small chains; disulfide-linked. The disulfide link is formed within the large subunit homodimers. Mg(2+) is required as a cofactor. Post-translationally, the disulfide bond which can form in the large chain dimeric partners within the hexadecamer appears to be associated with oxidative stress and protein turnover.

Its subcellular location is the plastid. The protein resides in the chloroplast. It catalyses the reaction 2 (2R)-3-phosphoglycerate + 2 H(+) = D-ribulose 1,5-bisphosphate + CO2 + H2O. It carries out the reaction D-ribulose 1,5-bisphosphate + O2 = 2-phosphoglycolate + (2R)-3-phosphoglycerate + 2 H(+). RuBisCO catalyzes two reactions: the carboxylation of D-ribulose 1,5-bisphosphate, the primary event in carbon dioxide fixation, as well as the oxidative fragmentation of the pentose substrate in the photorespiration process. Both reactions occur simultaneously and in competition at the same active site. This is Ribulose bisphosphate carboxylase large chain from Drymophloeus subdistichus (Palm tree).